The chain runs to 853 residues: A-kinase anchor protein 3 (853 aa).

The interval 124-137 is PKA-RII subunit binding domain; sequence VSFYANRLTNLVIA. The segment at 188–240 is disordered; it reads RNAAPDKAPGSGDRVSGSSQSPPNLKYKSTLKIKESTKERQGPDDKPPSKKSF. 2 positions are modified to phosphoserine: serine 205 and serine 208. Basic and acidic residues predominate over residues 219–235; that stretch reads KIKESTKERQGPDDKPP. A Phosphoserine modification is found at serine 403. A Phosphotyrosine modification is found at tyrosine 404. 2 positions are modified to phosphoserine: serine 635 and serine 636.

The protein belongs to the AKAP110 family. In terms of assembly, interacts with ROPN1 and ROPN1L. Interacts with QRICH2. Phosphorylated by STK33 during sperm flagella assembly. Phosphorylated on tyrosine residues. In terms of tissue distribution, testis specific; only expressed in spermatids.

The protein resides in the cytoplasmic vesicle. It localises to the secretory vesicle. The protein localises to the acrosome. Its subcellular location is the cell projection. It is found in the cilium. The protein resides in the flagellum. Structural component of sperm fibrous sheath. Required for the formation of the subcellular structure of the sperm flagellum, sperm motility and male fertility. In Homo sapiens (Human), this protein is A-kinase anchor protein 3.